We begin with the raw amino-acid sequence, 497 residues long: Cytochrome P450 2D6 (497 aa).

Residue aspartate 301 coordinates substrate. Residue cysteine 443 participates in heme binding.

It belongs to the cytochrome P450 family. It depends on heme as a cofactor.

The protein localises to the endoplasmic reticulum membrane. Its subcellular location is the microsome membrane. It catalyses the reaction (5Z,8Z,11Z,14Z)-eicosatetraenoate + reduced [NADPH--hemoprotein reductase] + O2 = (8R,9S)-epoxy-(5Z,11Z,14Z)-eicosatrienoate + oxidized [NADPH--hemoprotein reductase] + H2O + H(+). The enzyme catalyses (5Z,8Z,11Z,14Z)-eicosatetraenoate + reduced [NADPH--hemoprotein reductase] + O2 = (11R,12S)-epoxy-(5Z,8Z,14Z)-eicosatrienoate + oxidized [NADPH--hemoprotein reductase] + H2O + H(+). It carries out the reaction (5Z,8Z,11Z,14Z)-eicosatetraenoate + reduced [NADPH--hemoprotein reductase] + O2 = (14S,15R)-epoxy-(5Z,8Z,11Z)-eicosatrienoate + oxidized [NADPH--hemoprotein reductase] + H2O + H(+). The catalysed reaction is N-(5Z,8Z,11Z,14Z-eicosatetraenoyl)-ethanolamine + reduced [NADPH--hemoprotein reductase] + O2 = N-(8,9-epoxy-5Z,11Z,14Z-eicosatrienoyl)-ethanolamine + oxidized [NADPH--hemoprotein reductase] + H2O + H(+). It catalyses the reaction N-(5Z,8Z,11Z,14Z-eicosatetraenoyl)-ethanolamine + reduced [NADPH--hemoprotein reductase] + O2 = N-(11,12-epoxy-5Z,8Z,14Z-eicosatrienoyl)-ethanolamine + oxidized [NADPH--hemoprotein reductase] + H2O + H(+). The enzyme catalyses N-(5Z,8Z,11Z,14Z-eicosatetraenoyl)-ethanolamine + reduced [NADPH--hemoprotein reductase] + O2 = N-(14,15-epoxy-5Z,8Z,11Z-eicosatrienoyl)-ethanolamine + oxidized [NADPH--hemoprotein reductase] + H2O + H(+). It carries out the reaction N-(5Z,8Z,11Z,14Z-eicosatetraenoyl)-ethanolamine + reduced [NADPH--hemoprotein reductase] + O2 = N-(20-hydroxy-5Z,8Z,11Z,14Z-eicosatetraenoyl)-ethanolamine + oxidized [NADPH--hemoprotein reductase] + H2O + H(+). The catalysed reaction is (5Z,8Z,11Z,14Z,17Z)-eicosapentaenoate + reduced [NADPH--hemoprotein reductase] + O2 = (17S,18R)-epoxy-(5Z,8Z,11Z,14Z)-eicosatetraenoate + oxidized [NADPH--hemoprotein reductase] + H2O + H(+). It catalyses the reaction (4Z,7Z,10Z,13Z,16Z,19Z)-docosahexaenoate + reduced [NADPH--hemoprotein reductase] + O2 = (19R,20S)-epoxy-(4Z,7Z,10Z,13Z,16Z)-docosapentaenoate + oxidized [NADPH--hemoprotein reductase] + H2O + H(+). The enzyme catalyses (4Z,7Z,10Z,13Z,16Z,19Z)-docosahexaenoate + reduced [NADPH--hemoprotein reductase] + O2 = (19S,20R)-epoxy-(4Z,7Z,10Z,13Z,16Z)-docosapentaenoate + oxidized [NADPH--hemoprotein reductase] + H2O + H(+). It carries out the reaction cholesterol + reduced [NADPH--hemoprotein reductase] + O2 = 25-hydroxycholesterol + oxidized [NADPH--hemoprotein reductase] + H2O + H(+). The catalysed reaction is all-trans-retinol + reduced [NADPH--hemoprotein reductase] + O2 = all-trans-retinal + oxidized [NADPH--hemoprotein reductase] + 2 H2O + H(+). It functions in the pathway cofactor metabolism; retinol metabolism. Its pathway is lipid metabolism; fatty acid metabolism. It participates in steroid metabolism; cholesterol metabolism. Its function is as follows. A cytochrome P450 monooxygenase involved in the metabolism of fatty acids, steroids and retinoids. Mechanistically, uses molecular oxygen inserting one oxygen atom into a substrate, and reducing the second into a water molecule, with two electrons provided by NADPH via cytochrome P450 reductase (NADPH--hemoprotein reductase). Catalyzes the epoxidation of double bonds of polyunsaturated fatty acids (PUFA). Metabolizes endocannabinoid arachidonoylethanolamide (anandamide) to 20-hydroxyeicosatetraenoic acid ethanolamide (20-HETE-EA) and 8,9-, 11,12-, and 14,15-epoxyeicosatrienoic acid ethanolamides (EpETrE-EAs), potentially modulating endocannabinoid system signaling. Catalyzes the hydroxylation of carbon-hydrogen bonds. Metabolizes cholesterol toward 25-hydroxycholesterol, a physiological regulator of cellular cholesterol homeostasis. Catalyzes the oxidative transformations of all-trans retinol to all-trans retinal, a precursor for the active form all-trans-retinoic acid. Also involved in the oxidative metabolism of drugs such as antiarrhythmics, adrenoceptor antagonists, and tricyclic antidepressants. In Pan paniscus (Pygmy chimpanzee), this protein is Cytochrome P450 2D6 (CYP2D6).